The following is a 1332-amino-acid chain: Xanthine dehydrogenase/oxidase (1332 aa).

The 88-residue stretch at 4–91 (DELVFFVNGK…HVAVTTVEGI (88 aa)) folds into the 2Fe-2S ferredoxin-type domain. Residues Cys43, Cys48, Cys51, Cys73, Cys113, Cys116, Cys148, and Cys150 each contribute to the [2Fe-2S] cluster site. The 186-residue stretch at 229 to 414 (FEGERVTWIQ…LSIEIPYSRE (186 aa)) folds into the FAD-binding PCMH-type domain. Residues 257-264 (LVVGNTEI), Phe337, 347-351 (SLGGN), Asp360, Leu404, and Lys422 each bind FAD. A disulfide bridge connects residues Cys535 and Cys992. The Mo-molybdopterin site is built by Gln767 and Phe798. Substrate is bound by residues Glu802 and Arg880. Mo-molybdopterin is bound at residue Arg912. Residues Phe914 and Thr1010 each contribute to the substrate site. Ala1079 contacts Mo-molybdopterin. Glu1261 functions as the Proton acceptor in the catalytic mechanism.

This sequence belongs to the xanthine dehydrogenase family. In terms of assembly, homodimer. Interacts with BTN1A1. [2Fe-2S] cluster serves as cofactor. The cofactor is FAD. Requires Mo-molybdopterin as cofactor. Subject to partial proteolysis; this alters the enzyme from the dehydrogenase form (D) to the oxidase form (O). Post-translationally, contains sulfhydryl groups that are easily oxidized (in vitro); this alters the enzyme from the dehydrogenase form (D) to the oxidase form (O). In terms of tissue distribution, detected in milk (at protein level).

The protein localises to the cytoplasm. It localises to the peroxisome. It is found in the secreted. The enzyme catalyses xanthine + NAD(+) + H2O = urate + NADH + H(+). The catalysed reaction is hypoxanthine + NAD(+) + H2O = xanthine + NADH + H(+). It catalyses the reaction xanthine + O2 + H2O = urate + H2O2. Can be converted from the dehydrogenase form (D) to the oxidase form (O) irreversibly by proteolysis or reversibly through the oxidation of sulfhydryl groups. In terms of biological role, key enzyme in purine degradation. Catalyzes the oxidation of hypoxanthine to xanthine. Catalyzes the oxidation of xanthine to uric acid. Contributes to the generation of reactive oxygen species. The sequence is that of Xanthine dehydrogenase/oxidase (XDH) from Bos taurus (Bovine).